The sequence spans 256 residues: Thiazole synthase (256 aa).

K95 serves as the catalytic Schiff-base intermediate with DXP. Residues G156, 182 to 183 (AG), and 204 to 205 (NT) each bind 1-deoxy-D-xylulose 5-phosphate.

The protein belongs to the ThiG family. As to quaternary structure, homotetramer. Forms heterodimers with either ThiH or ThiS.

It is found in the cytoplasm. It carries out the reaction [ThiS sulfur-carrier protein]-C-terminal-Gly-aminoethanethioate + 2-iminoacetate + 1-deoxy-D-xylulose 5-phosphate = [ThiS sulfur-carrier protein]-C-terminal Gly-Gly + 2-[(2R,5Z)-2-carboxy-4-methylthiazol-5(2H)-ylidene]ethyl phosphate + 2 H2O + H(+). It functions in the pathway cofactor biosynthesis; thiamine diphosphate biosynthesis. In terms of biological role, catalyzes the rearrangement of 1-deoxy-D-xylulose 5-phosphate (DXP) to produce the thiazole phosphate moiety of thiamine. Sulfur is provided by the thiocarboxylate moiety of the carrier protein ThiS. In vitro, sulfur can be provided by H(2)S. The protein is Thiazole synthase of Escherichia coli O8 (strain IAI1).